A 70-amino-acid chain; its full sequence is Sec-independent protein translocase protein TatA (70 aa).

A helical membrane pass occupies residues 1–21; sequence MAIGVNQLLIILVIIVLLFGA.

The protein belongs to the TatA/E family. The Tat system comprises two distinct complexes: a TatABC complex, containing multiple copies of TatA, TatB and TatC subunits, and a separate TatA complex, containing only TatA subunits. Substrates initially bind to the TatABC complex, which probably triggers association of the separate TatA complex to form the active translocon.

Its subcellular location is the cell inner membrane. Functionally, part of the twin-arginine translocation (Tat) system that transports large folded proteins containing a characteristic twin-arginine motif in their signal peptide across membranes. TatA could form the protein-conducting channel of the Tat system. This Campylobacter curvus (strain 525.92) protein is Sec-independent protein translocase protein TatA.